We begin with the raw amino-acid sequence, 44 residues long: Thymosin beta-10 (44 aa).

Composition is skewed to basic and acidic residues over residues 1–25 and 33–44; these read MADK…ETQE and ETIEQEKRSEIS. Residues 1–44 form a disordered region; it reads MADKPDMGEIASFDKAKLKKTETQEKNTLPTKETIEQEKRSEIS. Ala2 carries the post-translational modification N-acetylalanine. Lys4 carries the N6-acetyllysine modification. Ser12 carries the phosphoserine modification. Lys15 carries the N6-acetyllysine modification. Phosphothreonine occurs at positions 21, 23, and 34. The residue at position 39 (Lys39) is an N6-acetyllysine. Position 41 is a phosphoserine (Ser41).

This sequence belongs to the thymosin beta family.

The protein localises to the cytoplasm. It localises to the cytoskeleton. Its function is as follows. Plays an important role in the organization of the cytoskeleton. Binds to and sequesters actin monomers (G actin) and therefore inhibits actin polymerization. This chain is Thymosin beta-10 (Tmsb10), found in Rattus norvegicus (Rat).